Reading from the N-terminus, the 165-residue chain is Putative protein FAM86C1P (165 aa).

The protein belongs to the class I-like SAM-binding methyltransferase superfamily. EEF2KMT family. In terms of assembly, interacts with EEF2KMT.

This chain is Putative protein FAM86C1P, found in Homo sapiens (Human).